The chain runs to 217 residues: Large ribosomal subunit protein uL1 (217 aa).

This sequence belongs to the universal ribosomal protein uL1 family. In terms of assembly, part of the 50S ribosomal subunit.

In terms of biological role, binds directly to 23S rRNA. Probably involved in E site tRNA release. Functionally, protein L1 is also a translational repressor protein, it controls the translation of its operon by binding to its mRNA. The polypeptide is Large ribosomal subunit protein uL1 (Aeropyrum pernix (strain ATCC 700893 / DSM 11879 / JCM 9820 / NBRC 100138 / K1)).